The primary structure comprises 93 residues: Alpha-defensin 1 (93 aa).

A signal peptide spans 1–19; that stretch reads MKKLVLLFALVLLGFQVQA. The propeptide occupies 20 to 58; sequence DSIQNTDEETKTEEQPGEEDQAVSVSFGDPEGTSLQEES. The segment at 24 to 54 is disordered; the sequence is NTDEETKTEEQPGEEDQAVSVSFGDPEGTSL. 3 disulfides stabilise this stretch: Cys-64-Cys-92, Cys-66-Cys-81, and Cys-71-Cys-91.

It belongs to the alpha-defensin family. In terms of tissue distribution, paneth cells of the small bowel.

Its subcellular location is the secreted. In terms of biological role, probably contributes to the antimicrobial barrier function of the small bowel mucosa. Has antibacterial activity against attenuated mutants of S.typhimurium. This is Alpha-defensin 1 (Defa1) from Mus musculus (Mouse).